A 396-amino-acid chain; its full sequence is Pectate lyase 5 (396 aa).

Residues 1-25 (MGIKHCCYILYFTLALVTLLQPVRS) form the signal peptide. N-linked (GlcNAc...) asparagine glycosylation is present at asparagine 36. An intrachain disulfide couples cysteine 53 to cysteine 70. Residues aspartate 193, aspartate 217, and aspartate 221 each contribute to the Ca(2+) site. Arginine 273 is a catalytic residue.

The protein belongs to the polysaccharide lyase 1 family. Amb a subfamily. As to quaternary structure, monomer. It depends on Ca(2+) as a cofactor. In terms of processing, the N-terminus is blocked. Pollen and flowers.

The catalysed reaction is Eliminative cleavage of (1-&gt;4)-alpha-D-galacturonan to give oligosaccharides with 4-deoxy-alpha-D-galact-4-enuronosyl groups at their non-reducing ends.. It participates in glycan metabolism; pectin degradation; 2-dehydro-3-deoxy-D-gluconate from pectin: step 2/5. Has pectate lyase activity. This Ambrosia artemisiifolia (Common ragweed) protein is Pectate lyase 5.